A 469-amino-acid chain; its full sequence is Protein RUFY3 (469 aa).

Residues Thr5 and Thr12 each carry the phosphothreonine modification. 2 positions are modified to phosphoserine: Ser34 and Ser49. A Phosphothreonine modification is found at Thr51. An RUN domain is found at 95 to 227 (DSDYAPLQQF…IDANFCMKGE (133 aa)). 2 coiled-coil regions span residues 271–362 (NRHL…VEKE) and 422–463 (KSEL…AANK).

As to quaternary structure, interacts with PAK1. Interacts (via C-terminus) with Ras-related Rab-5 proteins. Interacts (via C-terminus) with Ras-related Rap-2 proteins. Interacts with PIK3CA and PIK3R1. Interacts (via N-terminus) with FSCN1; this interaction induces neuron axon development. Interacts with DBN1. Interacts (via the second coiled coil) with GTP-, but not GDP-bound ARL8A and ARL8B. Interacts with dynactin/DCTN1 and the dynein intermediate chain DYNC1I1/2. Directly interacts with DYNC1LI1. Post-translationally, isoform 1 is partially phosphorylated. Phosphorylated by PAK1. Expressed in brain (at protein level).

The protein localises to the cytoplasm. Its subcellular location is the endomembrane system. It is found in the cell projection. It localises to the invadopodium. The protein resides in the growth cone. The protein localises to the perikaryon. Its subcellular location is the filopodium. It is found in the lamellipodium. It localises to the lysosome. Functionally, ARL8 effector that promotes the coupling of endolysosomes to dynein-dynactin for retrograde transport along microtubules. Acts by binding both GTP-bound ARL8 and dynein-dynactin. In nonneuronal cells, promotes concentration of endolysosomes in the juxtanuclear area. In hippocampal neurons, drives retrograde transport of endolysosomes from the axon to the soma. Plays a role in the generation of neuronal polarity formation and axon growth. Implicated in the formation of a single axon by developing neurons. May inhibit the formation of additional axons by inhibition of PI3K in minor neuronal processes. Plays a role in the formation of F-actin-enriched protrusive structures at the cell periphery. Plays a role in cytoskeletal organization by regulating the subcellular localization of FSCN1 and DBN1 at axonal growth cones. This chain is Protein RUFY3, found in Rattus norvegicus (Rat).